A 336-amino-acid polypeptide reads, in one-letter code: UDP-3-O-acylglucosamine N-acyltransferase (336 aa).

Residue histidine 233 is the Proton acceptor of the active site.

The protein belongs to the transferase hexapeptide repeat family. LpxD subfamily. As to quaternary structure, homotrimer.

It catalyses the reaction a UDP-3-O-[(3R)-3-hydroxyacyl]-alpha-D-glucosamine + a (3R)-hydroxyacyl-[ACP] = a UDP-2-N,3-O-bis[(3R)-3-hydroxyacyl]-alpha-D-glucosamine + holo-[ACP] + H(+). It functions in the pathway bacterial outer membrane biogenesis; LPS lipid A biosynthesis. Its function is as follows. Catalyzes the N-acylation of UDP-3-O-acylglucosamine using 3-hydroxyacyl-ACP as the acyl donor. Is involved in the biosynthesis of lipid A, a phosphorylated glycolipid that anchors the lipopolysaccharide to the outer membrane of the cell. The protein is UDP-3-O-acylglucosamine N-acyltransferase of Helicobacter pylori (strain ATCC 700392 / 26695) (Campylobacter pylori).